The chain runs to 208 residues: UPF0637 protein BCG9842_B1177 (208 aa).

The protein belongs to the UPF0637 family.

In Bacillus cereus (strain G9842), this protein is UPF0637 protein BCG9842_B1177.